The following is a 759-amino-acid chain: MIFRTIRIRDADDARLKAISKRLGLALSLDEMKAVRSYFERLGRDPIDAEIHAVAQSWSEHCSYKSSKYYLKKYLGSLKTDYTILAMEDDAGVVDFDGEYAYVLKMESHNHPSAVEPYGGAATGIGGIVRDVLCMGAQPVALIDSLFLGDVSSDRYEGLLSPRYIFGGVVGGIRDYGNRIGIPNVAGSLYFDKLYNSNPLVNAGCVGIVRRDRIVRSKSYKPGDVLVLMGGKTGRDGIHGVNFASTTLGKVTKSSRLAIQLGNPIVEQPMIKAVLEANDAGLIRAMKDLGGGGLSSAATEMVYAGGFGAEITLDDIKLKESNMSGWEIWISESQERMLMECYPEDVEKIRQIAEKWNLDFSVIGQVTADRRIRVYYKKRKIIDMDIEFLDDSPVYQRPYRIKEVEKSVTVPQEPEDLNSFVRDFMARLNTCARFNVVRQYDHTVRGSTIVTPFVGRPNKETHADATVIKPLENSMRGLVLTSGSRPNMVSVDPYAGTLLTLAEAYKNILSTGGRPHSVVDALNFGNPEREEIMGQFVESVRAIGDFCRKMGLPVVAGNVSFYNEYRKTDIMPTPTIMMVGLIDDVRRSRTTYMKGSGNAIYLIGEPCDNLTGSEYSRMHGYTDGFLPAPDLDELTRIRDFLSSKADMILSSHDVSSGGLFAALSEMSFGSGIGFHVDISNVSAARPTVKLFSECGNGLVLEIAKDKEEQFVDGSNGLAIKRLGETGGDRIIVDEAGLNIIDVAVDDLRGAWEHGLDRYI.

H61 is an active-site residue. ATP contacts are provided by Y64 and K105. E107 contacts Mg(2+). Substrate is bound by residues 108–111 and R130; that span reads SHNH. Catalysis depends on H109, which acts as the Proton acceptor. A Mg(2+)-binding site is contributed by D131. A substrate-binding site is contributed by Q260. D288 lines the Mg(2+) pocket. Residue 332-334 participates in substrate binding; the sequence is ESQ. Residues D520 and G557 each coordinate ATP. N558 is a Mg(2+) binding site. Position 560 (S560) interacts with substrate.

Belongs to the FGAMS family. As to quaternary structure, monomer. Part of the FGAM synthase complex composed of 1 PurL, 1 PurQ and 2 PurS subunits.

The protein localises to the cytoplasm. It catalyses the reaction N(2)-formyl-N(1)-(5-phospho-beta-D-ribosyl)glycinamide + L-glutamine + ATP + H2O = 2-formamido-N(1)-(5-O-phospho-beta-D-ribosyl)acetamidine + L-glutamate + ADP + phosphate + H(+). The protein operates within purine metabolism; IMP biosynthesis via de novo pathway; 5-amino-1-(5-phospho-D-ribosyl)imidazole from N(2)-formyl-N(1)-(5-phospho-D-ribosyl)glycinamide: step 1/2. In terms of biological role, part of the phosphoribosylformylglycinamidine synthase complex involved in the purines biosynthetic pathway. Catalyzes the ATP-dependent conversion of formylglycinamide ribonucleotide (FGAR) and glutamine to yield formylglycinamidine ribonucleotide (FGAM) and glutamate. The FGAM synthase complex is composed of three subunits. PurQ produces an ammonia molecule by converting glutamine to glutamate. PurL transfers the ammonia molecule to FGAR to form FGAM in an ATP-dependent manner. PurS interacts with PurQ and PurL and is thought to assist in the transfer of the ammonia molecule from PurQ to PurL. The protein is Phosphoribosylformylglycinamidine synthase subunit PurL of Thermoplasma acidophilum (strain ATCC 25905 / DSM 1728 / JCM 9062 / NBRC 15155 / AMRC-C165).